Reading from the N-terminus, the 317-residue chain is Large ribosomal subunit protein uL10 (317 aa).

This sequence belongs to the universal ribosomal protein uL10 family. As to quaternary structure, P0 forms a pentameric complex by interaction with dimers of P1 and P2. Phosphorylated.

Its function is as follows. Ribosomal protein P0 is the functional equivalent of E.coli protein L10. This is Large ribosomal subunit protein uL10 (rplp0) from Ictalurus punctatus (Channel catfish).